Consider the following 472-residue polypeptide: Tyrosine--tRNA ligase, mitochondrial (472 aa).

Y72 is an L-tyrosine binding site. An ATP-binding site is contributed by D76. The 'HIGH' region signature appears at 77 to 86 (PTGDSLHVGH). Positions 116, 216, 220, 223, and 242 each coordinate L-tyrosine. Residues I269 and K279 each contribute to the ATP site. The 'KMSKS' region motif lies at 276-280 (KLGKS). Residues K350 and K362 each carry the N6-acetyllysine modification.

This sequence belongs to the class-I aminoacyl-tRNA synthetase family. In terms of assembly, homodimer.

It localises to the mitochondrion matrix. The catalysed reaction is tRNA(Tyr) + L-tyrosine + ATP = L-tyrosyl-tRNA(Tyr) + AMP + diphosphate + H(+). Catalyzes the attachment of tyrosine to tRNA(Tyr) in a two-step reaction: tyrosine is first activated by ATP to form Tyr-AMP and then transferred to the acceptor end of tRNA(Tyr). This is Tyrosine--tRNA ligase, mitochondrial (Yars2) from Mus musculus (Mouse).